A 952-amino-acid chain; its full sequence is UvrABC system protein A (952 aa).

Position 38–45 (38–45 (GLSGSGKS)) interacts with ATP. A C4-type zinc finger spans residues 258–285 (CNECGFSIPELEPRFFSFNSPVGACKSC). ABC transporter domains lie at 315–596 (FRSV…KKSI) and 616–945 (GNGK…LFLE). 648 to 655 (GVSGSGKS) serves as a coordination point for ATP. Residues 747–773 (CENCSGDGLIKIEMHFLPDVFVKCESC) form a C4-type zinc finger.

Belongs to the ABC transporter superfamily. UvrA family. As to quaternary structure, forms a heterotetramer with UvrB during the search for lesions.

It localises to the cytoplasm. The UvrABC repair system catalyzes the recognition and processing of DNA lesions. UvrA is an ATPase and a DNA-binding protein. A damage recognition complex composed of 2 UvrA and 2 UvrB subunits scans DNA for abnormalities. When the presence of a lesion has been verified by UvrB, the UvrA molecules dissociate. This Malacoplasma penetrans (strain HF-2) (Mycoplasma penetrans) protein is UvrABC system protein A.